The sequence spans 372 residues: tRNA-specific 2-thiouridylase MnmA (372 aa).

Residues 9–16 and M35 contribute to the ATP site; that span reads GLSGGVDS. The interval 95 to 97 is interaction with target base in tRNA; the sequence is NPD. C100 (nucleophile) is an active-site residue. A disulfide bridge links C100 with C198. G124 lines the ATP pocket. Residues 148–150 form an interaction with tRNA region; that stretch reads KDQ. The active-site Cysteine persulfide intermediate is the C198. An interaction with tRNA region spans residues 317–318; it reads RY.

Belongs to the MnmA/TRMU family.

The protein resides in the cytoplasm. It carries out the reaction S-sulfanyl-L-cysteinyl-[protein] + uridine(34) in tRNA + AH2 + ATP = 2-thiouridine(34) in tRNA + L-cysteinyl-[protein] + A + AMP + diphosphate + H(+). Functionally, catalyzes the 2-thiolation of uridine at the wobble position (U34) of tRNA, leading to the formation of s(2)U34. This is tRNA-specific 2-thiouridylase MnmA from Delftia acidovorans (strain DSM 14801 / SPH-1).